A 1408-amino-acid polypeptide reads, in one-letter code: DNA-directed RNA polymerase subunit beta (1408 aa).

The tract at residues 1383-1408 (PERQRSFGGDFLGGGDGEERKTGTEA) is disordered. Positions 1399 to 1408 (GEERKTGTEA) are enriched in basic and acidic residues.

This sequence belongs to the RNA polymerase beta chain family. In terms of assembly, the RNAP catalytic core consists of 2 alpha, 1 beta, 1 beta' and 1 omega subunit. When a sigma factor is associated with the core the holoenzyme is formed, which can initiate transcription.

The enzyme catalyses RNA(n) + a ribonucleoside 5'-triphosphate = RNA(n+1) + diphosphate. In terms of biological role, DNA-dependent RNA polymerase catalyzes the transcription of DNA into RNA using the four ribonucleoside triphosphates as substrates. This is DNA-directed RNA polymerase subunit beta from Myxococcus xanthus (strain DK1622).